The primary structure comprises 459 residues: Serine protease HTRA3 (459 aa).

An N-terminal signal peptide occupies residues 1–23 (MQARALLPATLATLATLAVSVLA). The IGFBP N-terminal domain occupies 27 to 90 (PAAPCPARCD…ECVRGVCRCR (64 aa)). 8 disulfide bridges follow: C31–C54, C35–C56, C40–C57, C45–C60, C68–C82, C76–C87, C89–C107, and C96–C132. Residues 76–134 (CGDSLECVRGVCRCRWTHTVCGTDGHTYADVCALQAASRRALQISGTPVRQLQKGACPS) form the Kazal-like domain. The serine protease stretch occupies residues 181 to 346 (GSGFIMSEAG…AIPSDRITRF (166 aa)). Residues H197, D233, and S311 each act as charge relay system in the active site. Residues 365 to 450 (IRMRTITPSL…EVRRGNDDLL (86 aa)) form the PDZ domain.

This sequence belongs to the peptidase S1C family. As to quaternary structure, homotrimer. Interacts with TGFB1; the interaction inhibits TGFB-mediated signaling. Interacts with BMP4; the interaction inhibits BMP4-mediated signaling. Interacts with TGFB2, GDF5 and MYH9. As to expression, expressed in the ovary, essentially in granulosa cells in a follicle-stage specific manner. Highest levels found in large luteinizing granulosa cells.

It localises to the secreted. Functionally, serine protease that cleaves beta-casein/CSN2 as well as several extracellular matrix (ECM) proteoglycans such as decorin/DCN, biglycan/BGN and fibronectin/FN1. Inhibits signaling mediated by TGF-beta family proteins possibly indirectly by degradation of these ECM proteoglycans. May act as a tumor suppressor. Negatively regulates, in vitro, trophoblast invasion during placental development and may be involved in the development of the placenta in vivo. May also have a role in ovarian development, granulosa cell differentiation and luteinization. The protein is Serine protease HTRA3 (Htra3) of Rattus norvegicus (Rat).